The sequence spans 379 residues: Na(+)/H(+) antiporter NhaA (379 aa).

12 consecutive transmembrane segments (helical) span residues 14-34, 59-79, 95-115, 125-145, 154-174, 175-195, 200-220, 221-241, 261-281, 292-312, 328-348, and 359-379; these read AGGI…NTPL, LLMW…GMEV, VFPA…FLVF, GWAI…ALLG, IFLL…IALF, FSHD…AILI, LKIT…ASVL, KSGV…PLNG, FAIL…GMGM, IALG…FVAV, IFAV…LAGL, and VTAL…VLGY.

Belongs to the NhaA Na(+)/H(+) (TC 2.A.33) antiporter family.

It localises to the cell inner membrane. The catalysed reaction is Na(+)(in) + 2 H(+)(out) = Na(+)(out) + 2 H(+)(in). In terms of biological role, na(+)/H(+) antiporter that extrudes sodium in exchange for external protons. The chain is Na(+)/H(+) antiporter NhaA from Pasteurella multocida (strain Pm70).